The primary structure comprises 189 residues: Dirigent protein 21 (189 aa).

A signal peptide spans Met1–Ala19. N-linked (GlcNAc...) asparagine glycosylation is found at Asn72 and Asn173.

It belongs to the plant dirigent protein family. In terms of assembly, homodimer.

The protein localises to the secreted. Its function is as follows. Dirigent proteins impart stereoselectivity on the phenoxy radical-coupling reaction, yielding optically active lignans from two molecules of coniferyl alcohol in the biosynthesis of lignans, flavonolignans, and alkaloids and thus plays a central role in plant secondary metabolism. The chain is Dirigent protein 21 (DIR21) from Arabidopsis thaliana (Mouse-ear cress).